The primary structure comprises 863 residues: Potassium/sodium hyperpolarization-activated cyclic nucleotide-gated channel 2 (863 aa).

Residues 1-10 (MDARGGGGRP) are compositionally biased toward gly residues. Positions 1-131 (MDARGGGGRP…AGPAGEPRGS (131 aa)) are disordered. Residues 1–188 (MDARGGGGRP…PYSDFRFYWD (188 aa)) are Cytoplasmic-facing. The span at 17–47 (TPAPGPPPPPPPPAPPQPQPPPAPPPNPTTP) shows a compositional bias: pro residues. Over residues 106–128 (GAASGPSAAEEAGSEEAGPAGEP) the composition is skewed to low complexity. Serine 119 and serine 134 each carry phosphoserine. Residues 131 to 182 (SQASFLQRQFGALLQPGVNKFSLRMFGSQKAVEREQERVKSAGAWIIHPYSD) form an involved in subunit assembly region. A helical transmembrane segment spans residues 189–209 (FTMLLFMVGNLIIIPVGITFF). The Extracellular portion of the chain corresponds to 210–213 (KDET). The chain crosses the membrane as a helical span at residues 214–234 (TAPWIVFNVVSDTFFLMDLVL). Over 235–261 (NFRTGIVIEDNTEIILDPEKIKKKYLR) the chain is Cytoplasmic. Residues 262 to 282 (TWFVVDFVSSIPVDYIFLIVE) form a helical membrane-spanning segment. Residues 283–290 (KGIDSEVY) lie on the Extracellular side of the membrane. The chain crosses the membrane as a helical; Voltage-sensor span at residues 291-311 (KTARALRIVRFTKILSLLRLL). The Cytoplasmic segment spans residues 312 to 342 (RLSRLIRYIHQWEEIFHMTYDLASAVMRICN). The helical transmembrane segment at 343–363 (LISMMLLLCHWDGCLQFLVPM) threads the bilayer. Topologically, residues 364–386 (LQDFPSDCWVSINNMVNHSWSEL) are extracellular. The N-linked (GlcNAc...) asparagine glycan is linked to asparagine 380. Residues 387 to 408 (YSFALFKAMSHMLCIGYGRQAP) constitute an intramembrane region (pore-forming). The Extracellular segment spans residues 409 to 413 (ESMTD). A helical transmembrane segment spans residues 414 to 434 (IWLTMLSMIVGATCYAMFIGH). The Cytoplasmic portion of the chain corresponds to 435–863 (ATALIQSLDS…SARSRLSSNL (429 aa)). Residues glycine 581, glutamate 582, cysteine 584, arginine 591, threonine 592, and arginine 632 each coordinate 3',5'-cyclic AMP. Phosphoserine; by PKG/PRKG2 is present on serine 641. Phosphoserine is present on serine 726. Residue arginine 728 is modified to Omega-N-methylarginine. Residues 730–863 (VRRAPPGPLP…SARSRLSSNL (134 aa)) form a disordered region. The span at 734 to 755 (PPGPLPPAASPGPPAASPPAAP) shows a compositional bias: pro residues. Phosphoserine is present on residues serine 743, serine 750, and serine 757. Composition is skewed to low complexity over residues 756 to 765 (SSPRAPRTSP), 778 to 800 (PALP…PSLP), and 808 to 834 (PAAS…AAPS). 3 positions are modified to phosphoserine: serine 840, serine 842, and serine 847.

The protein belongs to the potassium channel HCN family. In terms of assembly, homotetramer. The channel is composed of a homo- or heterotetrameric complex of pore-forming subunits. Heterotetramer with HCN1. Forms an obligate 4:4 complex with accessory subunit PEX5L; regulates HCN2 cell-surface expression and cyclic nucleotide dependence. Interacts with KCNE2. S-palmitoylated. In terms of processing, N-glycosylated; required for cell surface trafficking of HCN2. Post-translationally, phosphorylation at Ser-641 by PRKG2 shifts the voltage-dependence to more negative voltages, hence counteracting the stimulatory effect of cGMP on gating. Highly expressed in brain. Detected at low levels in heart, in ventricle, atrium and in sinoatrial node (SAN).

Its subcellular location is the cell membrane. The enzyme catalyses Na(+)(in) = Na(+)(out). The catalysed reaction is K(+)(in) = K(+)(out). It catalyses the reaction NH4(+)(in) = NH4(+)(out). Its activity is regulated as follows. Activated by cAMP, and at 10-100 times higher concentrations, also by cGMP. cAMP binding causes a conformation change that leads to the assembly of an active tetramer and channel opening. In the absence of cAMP, the C-terminal region is thought to exert a tonic inhibition on the pore when HCN2 is in a non-tetrameric form. Channel activity is modulated by intracellular chloride ions and pH; acidic pH shifts the activation to more negative voltages. Phosphatidylinositol-4,5- bisphosphate (PIP(2)) acts as a ligand that allosterically opens HCN2 by shifting voltage-dependent channel activation toward depolarized potentials. Inhibited by extracellular cesium ions. Hyperpolarization-activated ion channel exhibiting weak selectivity for potassium over sodium ions. Contributes to the native pacemaker currents in heart (If) and in neurons (Ih). Can also transport ammonium in the distal nephron. Involved in the initiation of neuropathic pain in sensory neurons. This is Potassium/sodium hyperpolarization-activated cyclic nucleotide-gated channel 2 from Mus musculus (Mouse).